The primary structure comprises 305 residues: Methionyl-tRNA formyltransferase (305 aa).

110–113 (SLLP) is a binding site for (6S)-5,6,7,8-tetrahydrofolate.

This sequence belongs to the Fmt family.

It carries out the reaction L-methionyl-tRNA(fMet) + (6R)-10-formyltetrahydrofolate = N-formyl-L-methionyl-tRNA(fMet) + (6S)-5,6,7,8-tetrahydrofolate + H(+). Functionally, attaches a formyl group to the free amino group of methionyl-tRNA(fMet). The formyl group appears to play a dual role in the initiator identity of N-formylmethionyl-tRNA by promoting its recognition by IF2 and preventing the misappropriation of this tRNA by the elongation apparatus. The sequence is that of Methionyl-tRNA formyltransferase from Ureaplasma parvum serovar 3 (strain ATCC 700970).